We begin with the raw amino-acid sequence, 161 residues long: Ribonuclease H (161 aa).

Residues 12–155 (QPQHVVIYTD…ADALANKGVE (144 aa)) enclose the RNase H type-1 domain. The Mg(2+) site is built by aspartate 21, glutamate 59, aspartate 81, and aspartate 147.

This sequence belongs to the RNase H family. As to quaternary structure, monomer. Mg(2+) serves as cofactor.

It is found in the cytoplasm. The catalysed reaction is Endonucleolytic cleavage to 5'-phosphomonoester.. Functionally, endonuclease that specifically degrades the RNA of RNA-DNA hybrids. The chain is Ribonuclease H from Polaromonas naphthalenivorans (strain CJ2).